Reading from the N-terminus, the 408-residue chain is Peptidase T (408 aa).

H78 contributes to the Zn(2+) binding site. Residue D80 is part of the active site. D140 is a binding site for Zn(2+). E173 (proton acceptor) is an active-site residue. Positions 174, 196, and 379 each coordinate Zn(2+).

This sequence belongs to the peptidase M20B family. Zn(2+) serves as cofactor.

Its subcellular location is the cytoplasm. The enzyme catalyses Release of the N-terminal residue from a tripeptide.. Its function is as follows. Cleaves the N-terminal amino acid of tripeptides. The chain is Peptidase T from Shigella flexneri serotype 5b (strain 8401).